The following is an 86-amino-acid chain: Large ribosomal subunit protein bL28 (86 aa).

Belongs to the bacterial ribosomal protein bL28 family.

In Phocaeicola vulgatus (strain ATCC 8482 / DSM 1447 / JCM 5826 / CCUG 4940 / NBRC 14291 / NCTC 11154) (Bacteroides vulgatus), this protein is Large ribosomal subunit protein bL28.